We begin with the raw amino-acid sequence, 54 residues long: uncharacterized protein (54 aa).

The interval 1–38 (MFPNSNGPNKMKALVAPSNSSTTSKTNNNNLPPNGRSS) is disordered. The span at 17 to 38 (PSNSSTTSKTNNNNLPPNGRSS) shows a compositional bias: low complexity.

This is an uncharacterized protein from Dictyostelium discoideum (Social amoeba).